Consider the following 211-residue polypeptide: Thiamine-phosphate synthase (211 aa).

4-amino-2-methyl-5-(diphosphooxymethyl)pyrimidine is bound by residues Q37–K41 and N69. D70 and D89 together coordinate Mg(2+). S108 contacts 4-amino-2-methyl-5-(diphosphooxymethyl)pyrimidine. T134–T136 lines the 2-[(2R,5Z)-2-carboxy-4-methylthiazol-5(2H)-ylidene]ethyl phosphate pocket. 4-amino-2-methyl-5-(diphosphooxymethyl)pyrimidine is bound at residue K137. 2-[(2R,5Z)-2-carboxy-4-methylthiazol-5(2H)-ylidene]ethyl phosphate-binding positions include G166 and V186–S187.

This sequence belongs to the thiamine-phosphate synthase family. It depends on Mg(2+) as a cofactor.

It catalyses the reaction 2-[(2R,5Z)-2-carboxy-4-methylthiazol-5(2H)-ylidene]ethyl phosphate + 4-amino-2-methyl-5-(diphosphooxymethyl)pyrimidine + 2 H(+) = thiamine phosphate + CO2 + diphosphate. It carries out the reaction 2-(2-carboxy-4-methylthiazol-5-yl)ethyl phosphate + 4-amino-2-methyl-5-(diphosphooxymethyl)pyrimidine + 2 H(+) = thiamine phosphate + CO2 + diphosphate. The catalysed reaction is 4-methyl-5-(2-phosphooxyethyl)-thiazole + 4-amino-2-methyl-5-(diphosphooxymethyl)pyrimidine + H(+) = thiamine phosphate + diphosphate. Its pathway is cofactor biosynthesis; thiamine diphosphate biosynthesis; thiamine phosphate from 4-amino-2-methyl-5-diphosphomethylpyrimidine and 4-methyl-5-(2-phosphoethyl)-thiazole: step 1/1. Condenses 4-methyl-5-(beta-hydroxyethyl)thiazole monophosphate (THZ-P) and 2-methyl-4-amino-5-hydroxymethyl pyrimidine pyrophosphate (HMP-PP) to form thiamine monophosphate (TMP). This Escherichia coli O9:H4 (strain HS) protein is Thiamine-phosphate synthase.